Consider the following 168-residue polypeptide: Photosystem I assembly protein Ycf3 (168 aa).

TPR repeat units lie at residues 35–68 (AFTYYRDGMSAQSEGNYAEALQNYYEAMRLEIDP), 72–105 (SYILYNIGLIHTSNGEHTKALEYYFRALERNPFL), and 120–153 (GEQAIQQGDSEIAEAWFDQAAEYWKQAIALTPGN).

The protein belongs to the Ycf3 family.

It is found in the plastid. It localises to the chloroplast thylakoid membrane. Essential for the assembly of the photosystem I (PSI) complex. May act as a chaperone-like factor to guide the assembly of the PSI subunits. In Solanum bulbocastanum (Wild potato), this protein is Photosystem I assembly protein Ycf3.